Reading from the N-terminus, the 261-residue chain is High-affinity zinc uptake system membrane protein ZnuB (261 aa).

Topologically, residues 1–7 (MIELLFP) are periplasmic. A helical transmembrane segment spans residues 8–28 (GWLAGIMLACAAGPLGSFVVW). The Cytoplasmic segment spans residues 29–53 (RRMSYFGDTLAHASLLGVAFGLLLD). Residues 54-74 (VNPFYAVIAVTLLLAGGLVWL) traverse the membrane as a helical segment. The Periplasmic segment spans residues 75-83 (EKRPQLAID). A helical transmembrane segment spans residues 84–104 (TLLGIMAHSALSLGLVVVSLM). Residues 105–121 (SNIRVDLMAYLFGDLLA) are Cytoplasmic-facing. A helical transmembrane segment spans residues 122–142 (VTPEDLISIAIGVVIVVAILF). The Periplasmic segment spans residues 143–177 (WQWRNLLSMTISPDLAFVDGVKLQRVKLLLMLVTA). A helical transmembrane segment spans residues 178-198 (LTIGVAMKFVGALIITSLLII). At 199–213 (PAATARRFARTPEQM) the chain is on the cytoplasmic side. A helical membrane pass occupies residues 214-234 (AGVAVLVGMVAVTGGLTFSAV). Residue Tyr235 is a topological domain, periplasmic. The chain crosses the membrane as a helical span at residues 236–256 (DTPAGPSVVLCAALLFILSMM). Residues 257–261 (KKQAS) are Cytoplasmic-facing.

This sequence belongs to the ABC-3 integral membrane protein family.

It localises to the cell inner membrane. Involved in the high-affinity zinc uptake transport system. This is High-affinity zinc uptake system membrane protein ZnuB (znuB) from Escherichia coli (strain K12).